Reading from the N-terminus, the 380-residue chain is Cytochrome b (380 aa).

4 helical membrane passes run Phe34–Met54, Trp78–Ile99, Trp114–Leu134, and Phe179–Leu199. Heme b contacts are provided by His84 and His98. His183 and His197 together coordinate heme b. His202 serves as a coordination point for a ubiquinone. 4 consecutive transmembrane segments (helical) span residues Tyr227–Leu247, Leu289–His309, Phe321–Ala341, and Phe348–Pro368.

This sequence belongs to the cytochrome b family. As to quaternary structure, the cytochrome bc1 complex contains 3 respiratory subunits (MT-CYB, CYC1 and UQCRFS1), 2 core proteins (UQCRC1 and UQCRC2) and probably 6 low-molecular weight proteins. Requires heme b as cofactor.

The protein resides in the mitochondrion inner membrane. In terms of biological role, component of the ubiquinol-cytochrome c reductase complex (complex III or cytochrome b-c1 complex) that is part of the mitochondrial respiratory chain. The b-c1 complex mediates electron transfer from ubiquinol to cytochrome c. Contributes to the generation of a proton gradient across the mitochondrial membrane that is then used for ATP synthesis. This is Cytochrome b (MT-CYB) from Pelomedusa subrufa (African side-necked turtle).